A 229-amino-acid polypeptide reads, in one-letter code: MIDHAHLRLFQFCDSQFPTGAFSHSFGLETYIQRDTVHDEESFQQWLVLFLNEQLTYADGLTMRLVYDALNENDTKAILKLDRILFVQNLPKETRQGSKQMGNRMVKLASELYDSDWINWYHAQMKDKKASLHPAICFTMLGHHLGVDIETIIDYYLYQNVSSLTQNAVRAIPLGQTAGQRIVHKMIPIMKETRDHIMTIPASQLGITAPGLEINQMEHENVNVRIFIS.

Belongs to the UreF family. As to quaternary structure, ureD, UreF and UreG form a complex that acts as a GTP-hydrolysis-dependent molecular chaperone, activating the urease apoprotein by helping to assemble the nickel containing metallocenter of UreC. The UreE protein probably delivers the nickel.

The protein localises to the cytoplasm. Its function is as follows. Required for maturation of urease via the functional incorporation of the urease nickel metallocenter. The sequence is that of Urease accessory protein UreF from Staphylococcus saprophyticus subsp. saprophyticus (strain ATCC 15305 / DSM 20229 / NCIMB 8711 / NCTC 7292 / S-41).